A 502-amino-acid chain; its full sequence is Myocilin (502 aa).

Positions 1–31 are cleaved as a signal peptide; the sequence is MPSCAYCCSCGPKMPALQLLFLACLVWGMGA. A coiled-coil region spans residues 82-183; sequence ADLESTKARV…QEVARLRRGQ (102 aa). Residues 166–198 form a disordered region; it reads ARRLEGSSQEVARLRRGQCPSTHHPSQDMLPGS. Asn-229 carries N-linked (GlcNAc...) asparagine glycosylation. Positions 242 to 501 constitute an Olfactomedin-like domain; that stretch reads GCGVLMWVGE…MVTYDIKLSE (260 aa). Cysteines 243 and 431 form a disulfide. Residues Asp-378, Asn-426, Ala-427, Val-475, and Asp-476 each contribute to the Ca(2+) site.

Homodimer (via N-terminus). Can also form higher oligomers. Interacts with OLFM3, FN1, NRCAM, GLDN and NFASC. Interacts (via N-terminus) with MYL2. Interacts with SFRP1, FRZB, FZD7, FZD10, FZD1 and WIF1; regulates Wnt signaling. Interacts with SNTA1; regulates muscle hypertrophy. Interacts with ERBB2 and ERBB3; activates ERBB2-ERBB3 signaling pathway. Interacts with SNCG; affects its secretion and its aggregation. In terms of processing, palmitoylated. Undergoes a calcium-dependent proteolytic cleavage at Gln-225 by CAPN2 in the endoplasmic reticulum. The result is the production of two fragments, one of 35 kDa containing the C-terminal olfactomedin-like domain, and another of 20 kDa containing the N-terminal leucine zipper-like domain. Post-translationally, glycosylated. In terms of tissue distribution, highly expressed in skeletal muscle and retina. Also detected at lower levels in thyroid gland but not in other endocrine glands such as the adrenal or pituitary glands.

Its subcellular location is the secreted. The protein localises to the golgi apparatus. The protein resides in the cytoplasmic vesicle. It is found in the extracellular space. It localises to the extracellular matrix. Its subcellular location is the extracellular exosome. The protein localises to the mitochondrion. The protein resides in the mitochondrion intermembrane space. It is found in the mitochondrion inner membrane. It localises to the mitochondrion outer membrane. Its subcellular location is the rough endoplasmic reticulum. The protein localises to the cell projection. The protein resides in the cilium. It is found in the endoplasmic reticulum. Its function is as follows. Secreted glycoprotein regulating the activation of different signaling pathways in adjacent cells to control different processes including cell adhesion, cell-matrix adhesion, cytoskeleton organization and cell migration. Promotes substrate adhesion, spreading and formation of focal contacts. Negatively regulates cell-matrix adhesion and stress fiber assembly through Rho protein signal transduction. Modulates the organization of actin cytoskeleton by stimulating the formation of stress fibers through interactions with components of Wnt signaling pathways. Promotes cell migration through activation of PTK2 and the downstream phosphatidylinositol 3-kinase signaling. Plays a role in bone formation and promotes osteoblast differentiation in a dose-dependent manner through mitogen-activated protein kinase signaling. Mediates myelination in the peripheral nervous system through ERBB2/ERBB3 signaling. Plays a role as a regulator of muscle hypertrophy through the components of dystrophin-associated protein complex. Involved in positive regulation of mitochondrial depolarization. Plays a role in neurite outgrowth. May participate in the obstruction of fluid outflow in the trabecular meshwork. The chain is Myocilin (Myoc) from Rattus norvegicus (Rat).